The sequence spans 219 residues: Tritrans,polycis-undecaprenyl-diphosphate synthase (geranylgeranyl-diphosphate specific) (219 aa).

Aspartate 12 is an active-site residue. Residue aspartate 12 participates in Mg(2+) binding. Substrate contacts are provided by residues 13–16, tryptophan 17, and 59–61; these read GNRR and SRD. Asparagine 62 serves as the catalytic Proton acceptor. Substrate-binding positions include arginine 66, arginine 168, and 174 to 176; that span reads RLS. Glutamate 187 is a binding site for Mg(2+).

The protein belongs to the UPP synthase family. As to quaternary structure, homodimer. Mg(2+) serves as cofactor.

It carries out the reaction geranylgeranyl diphosphate + 7 isopentenyl diphosphate = tri-trans,hepta-cis-undecaprenyl diphosphate + 7 diphosphate. In terms of biological role, catalyzes the sequential condensation of isopentenyl diphosphate (IPP) with geranylgeranyl diphosphate (GGPP) to yield (2Z,6Z,10Z,14Z,18Z,22Z,26Z,30E,34E,38E)-undecaprenyl diphosphate (tritrans,heptacis-UPP). It is probably the precursor of glycosyl carrier lipids. The protein is Tritrans,polycis-undecaprenyl-diphosphate synthase (geranylgeranyl-diphosphate specific) of Aeropyrum pernix (strain ATCC 700893 / DSM 11879 / JCM 9820 / NBRC 100138 / K1).